The primary structure comprises 116 residues: MSLAIDLEVKQDELIVRLSGELDHHTAENCMNKCRMCLEKRAIRHIVLNLGQLTFMDSSGLGVILGRYKQIKNVGGQMVVCAVSPAVKRLFDMSGLFKIIRVEADEQFALQALGVA.

One can recognise an STAS domain in the interval 3–113 (LAIDLEVKQD…ADEQFALQAL (111 aa)). Ser58 carries the post-translational modification Phosphoserine.

Belongs to the anti-sigma-factor antagonist family. Post-translationally, phosphorylated by SpoIIAB on a serine residue.

Functionally, in the phosphorylated form it could act as an anti-anti-sigma factor that counteracts SpoIIAB and thus releases sigma f from inhibition. The sequence is that of Anti-sigma F factor antagonist (spoIIAA) from Geobacillus stearothermophilus (Bacillus stearothermophilus).